The following is a 641-amino-acid chain: Probable potassium transport system protein Kup (641 aa).

12 helical membrane-spanning segments follow: residues 29–49 (ISLA…LYAI), 66–86 (ILGV…LKYL), 119–139 (WVLV…AMIT), 156–176 (PAFA…LFLF), 185–205 (GALF…LGII), 231–251 (LHGF…EALY), 266–286 (WVLF…AFLL), 298–318 (ALVP…ATVI), 356–376 (IYVP…VLGF), 384–404 (AAYG…FFFV), 415–435 (VLWA…GASM), and 438–458 (LFHG…LMNT).

This sequence belongs to the HAK/KUP transporter (TC 2.A.72) family.

It is found in the cell inner membrane. The catalysed reaction is K(+)(in) + H(+)(in) = K(+)(out) + H(+)(out). In terms of biological role, transport of potassium into the cell. Likely operates as a K(+):H(+) symporter. The chain is Probable potassium transport system protein Kup from Chlorobium phaeovibrioides (strain DSM 265 / 1930) (Prosthecochloris vibrioformis (strain DSM 265)).